Reading from the N-terminus, the 117-residue chain is Large ribosomal subunit protein bL20 (117 aa).

The protein belongs to the bacterial ribosomal protein bL20 family.

Functionally, binds directly to 23S ribosomal RNA and is necessary for the in vitro assembly process of the 50S ribosomal subunit. It is not involved in the protein synthesizing functions of that subunit. The protein is Large ribosomal subunit protein bL20 of Rickettsia peacockii (strain Rustic).